The chain runs to 874 residues: Isopimaradiene synthase, chloroplastic (874 aa).

Over residues 1–12 (MALPSSSLSSRI) the composition is skewed to polar residues. A disordered region spans residues 1–20 (MALPSSSLSSRIPTGPHPLT). The transit peptide at 1–37 (MALPSSSLSSRIPTGPHPLTHTQCIPHFSTTINAGIS) directs the protein to the chloroplast. Positions 407, 409, 626, 630, 770, and 778 each coordinate Mg(2+). The DXDD motif motif lies at 407-410 (DIDD). Positions 626 to 630 (DDLYD) match the DDXXD motif motif.

The protein belongs to the terpene synthase family. Tpsd subfamily. It depends on Mg(2+) as a cofactor. Mn(2+) serves as cofactor.

It localises to the plastid. The protein localises to the chloroplast. The catalysed reaction is (+)-copalyl diphosphate = isopimara-8(14),15-diene + diphosphate. Its pathway is terpene metabolism; oleoresin biosynthesis. Terpene synthase (TPS) involved in the biosynthesis of diterpene natural products included in conifer oleoresin secretions and volatile emissions; these compounds contribute to biotic and abiotic stress defense against herbivores and pathogens. Catalyzes the conversion of (+)-copalyl diphosphate ((+)-CPP) to isopimaradiene. The polypeptide is Isopimaradiene synthase, chloroplastic (Picea sitchensis (Sitka spruce)).